The primary structure comprises 247 residues: NAD(P)H-quinone oxidoreductase subunit K (247 aa).

Positions 63, 64, 128, and 159 each coordinate [4Fe-4S] cluster. Residues 218 to 247 (TRQAPPKELTEAIGMEVPPALASQKQKEEA) are disordered.

It belongs to the complex I 20 kDa subunit family. In terms of assembly, NDH-1 can be composed of about 15 different subunits; different subcomplexes with different compositions have been identified which probably have different functions. It depends on [4Fe-4S] cluster as a cofactor.

The protein localises to the cellular thylakoid membrane. It carries out the reaction a plastoquinone + NADH + (n+1) H(+)(in) = a plastoquinol + NAD(+) + n H(+)(out). The catalysed reaction is a plastoquinone + NADPH + (n+1) H(+)(in) = a plastoquinol + NADP(+) + n H(+)(out). In terms of biological role, NDH-1 shuttles electrons from an unknown electron donor, via FMN and iron-sulfur (Fe-S) centers, to quinones in the respiratory and/or the photosynthetic chain. The immediate electron acceptor for the enzyme in this species is believed to be plastoquinone. Couples the redox reaction to proton translocation, and thus conserves the redox energy in a proton gradient. Cyanobacterial NDH-1 also plays a role in inorganic carbon-concentration. In Crocosphaera subtropica (strain ATCC 51142 / BH68) (Cyanothece sp. (strain ATCC 51142)), this protein is NAD(P)H-quinone oxidoreductase subunit K.